We begin with the raw amino-acid sequence, 197 residues long: Probable adenylyl-sulfate kinase (197 aa).

33–40 serves as a coordination point for ATP; sequence GLSGSGKS. Ser107 (phosphoserine intermediate) is an active-site residue.

Belongs to the APS kinase family.

The enzyme catalyses adenosine 5'-phosphosulfate + ATP = 3'-phosphoadenylyl sulfate + ADP + H(+). Its pathway is sulfur metabolism; hydrogen sulfide biosynthesis; sulfite from sulfate: step 2/3. Functionally, catalyzes the synthesis of activated sulfate. This Bacillus subtilis (strain 168) protein is Probable adenylyl-sulfate kinase (cysC).